Here is a 1070-residue protein sequence, read N- to C-terminus: DNA-directed RNA polymerase subunit beta (1070 aa).

It belongs to the RNA polymerase beta chain family. In plastids the minimal PEP RNA polymerase catalytic core is composed of four subunits: alpha, beta, beta', and beta''. When a (nuclear-encoded) sigma factor is associated with the core the holoenzyme is formed, which can initiate transcription.

It localises to the plastid. The protein resides in the chloroplast. It catalyses the reaction RNA(n) + a ribonucleoside 5'-triphosphate = RNA(n+1) + diphosphate. Its function is as follows. DNA-dependent RNA polymerase catalyzes the transcription of DNA into RNA using the four ribonucleoside triphosphates as substrates. This chain is DNA-directed RNA polymerase subunit beta, found in Gossypium barbadense (Sea Island cotton).